We begin with the raw amino-acid sequence, 445 residues long: Exodeoxyribonuclease 7 large subunit (445 aa).

Belongs to the XseA family. Heterooligomer composed of large and small subunits.

The protein resides in the cytoplasm. The catalysed reaction is Exonucleolytic cleavage in either 5'- to 3'- or 3'- to 5'-direction to yield nucleoside 5'-phosphates.. Bidirectionally degrades single-stranded DNA into large acid-insoluble oligonucleotides, which are then degraded further into small acid-soluble oligonucleotides. The protein is Exodeoxyribonuclease 7 large subunit of Xanthomonas euvesicatoria pv. vesicatoria (strain 85-10) (Xanthomonas campestris pv. vesicatoria).